Here is a 134-residue protein sequence, read N- to C-terminus: Large ribosomal subunit protein eL32 (134 aa).

Belongs to the eukaryotic ribosomal protein eL32 family.

This chain is Large ribosomal subunit protein eL32 (RpL32), found in Apis mellifera (Honeybee).